The sequence spans 390 residues: Phosphoglycerate kinase (390 aa).

Residues 21–23 (DLN), R36, 59–62 (HLGR), R114, and R147 contribute to the substrate site. ATP-binding positions include K198, E314, and 340–343 (GGDT).

Belongs to the phosphoglycerate kinase family. In terms of assembly, monomer.

The protein resides in the cytoplasm. It carries out the reaction (2R)-3-phosphoglycerate + ATP = (2R)-3-phospho-glyceroyl phosphate + ADP. Its pathway is carbohydrate degradation; glycolysis; pyruvate from D-glyceraldehyde 3-phosphate: step 2/5. In Buchnera aphidicola subsp. Acyrthosiphon pisum (strain 5A), this protein is Phosphoglycerate kinase.